The sequence spans 262 residues: 14-3-3 protein I (262 aa).

It belongs to the 14-3-3 family. As to quaternary structure, homodimer. Forms a complex composed of CDPK1, PKA regulatory subunit PKAr and 14-3-3I; the complex is formed in merozoites in response to low extracellular level of K(+) and may play a role in microneme secretion. Interacts with CDPK1 (when phosphorylated) in a Ca(2+)-independent manner; the interaction does not regulate CDPK1 catalytic activity but is required for merozoite invasion of host erythrocytes. Interacts with PKA regulatory subunit PKAr (when phosphorylated) in a Ca(2+)-dependent manner. Interacts with histone H3 (when phosphorylated at 'Ser-28' or when phosphorylated at 'Ser-28' and 'Ser-32').

The protein resides in the cell membrane. Its subcellular location is the cytoplasm. It localises to the nucleus. Its function is as follows. Adapter protein which binds to its partners, usually via a phosphoserine or phosphothreonine motif. Binding generally results in the modulation of the activity and/or cellular localization of the binding partner. Via its interaction with CDPK1 and PKAr, involved in merozoite microneme secretion and thus in merozoite invasion of host erythrocytes. The sequence is that of 14-3-3 protein I from Plasmodium falciparum (isolate 3D7).